Consider the following 576-residue polypeptide: MISATNWVPRGFSSEFPEKYVLDDEEVERINQLAQLNLDDAKATLEEAEGESGVEDDAATGSSNKLKDQLDIDDDLKEYNLEEYDDEEIADNEGGKDVSMFPGLSNDSDVKFHEGEKGEDPYISLPNQEDSQEEKQELQVYPSDNLVLAARTEDDVSYLDIYVYDDGAGFHSSDIPVEEGDEADPDVARGLVRDPALYVHHDLMLPAFPLCVEWLDYKVGSNSEEAANYAAIGTFDPQIEIWNLDCVDKAFPDMILGEPLDNSMVSLKSKKKKKKSKTGHITTHHTDAVLSMAHNKYFRSVLASTSADHTVKLWDLNSGNAARSLASIHSNKNVSSSEWHMLNGSILLTGGYDSRVALTDVRISDESQMSKYWSAMAGEEIETVTFASENIILCGTDSGNVYSFDIRNNENRKPVWTLKAHDAGISTLCSNKFIPGMMSTGAMGEKTVKLWKFPLDDATNTKGPSMVLSRDFDVGNVLTSSFAPDIEVAGTMVIGGVNKVLKLWDVFTNRSVRKSFKSELENVQARAKEEAQKIGKSSRIARKYTSNDNPDTVITIDDQGEDEEEREGGDEHDDMA.

Residues 41–134 (AKATLEEAEG…LPNQEDSQEE (94 aa)) are disordered. 2 stretches are compositionally biased toward acidic residues: residues 46–58 (EEAE…EDDA) and 71–91 (DIDD…EIAD). S52 bears the Phosphoserine mark. Residues 108 to 120 (SDVKFHEGEKGED) show a composition bias toward basic and acidic residues. S131 carries the phosphoserine modification. WD repeat units lie at residues 207-252 (AFPL…KAFP), 284-324 (HHTD…AARS), 329-369 (HSNK…ESQM), 376-414 (MAGE…NRKP), 420-461 (AHDA…ATNT), and 472-514 (FDVG…SVRK). The interval 530 to 576 (EAQKIGKSSRIARKYTSNDNPDTVITIDDQGEDEEEREGGDEHDDMA) is disordered. The span at 558-576 (DQGEDEEEREGGDEHDDMA) shows a compositional bias: acidic residues.

It belongs to the WD repeat PWP1 family.

This is Periodic tryptophan protein 1 (PWP1) from Saccharomyces cerevisiae (strain ATCC 204508 / S288c) (Baker's yeast).